A 787-amino-acid chain; its full sequence is Protein translocase subunit SecA (787 aa).

Residues Gln85, 103-107, and Asp492 each bind ATP; that span reads GEGKT.

This sequence belongs to the SecA family. In terms of assembly, monomer and homodimer. Part of the essential Sec protein translocation apparatus which comprises SecA, SecYEG and auxiliary proteins SecDF. Other proteins may also be involved.

It is found in the cell membrane. The protein localises to the cytoplasm. The catalysed reaction is ATP + H2O + cellular proteinSide 1 = ADP + phosphate + cellular proteinSide 2.. Functionally, part of the Sec protein translocase complex. Interacts with the SecYEG preprotein conducting channel. Has a central role in coupling the hydrolysis of ATP to the transfer of proteins into and across the cell membrane, serving as an ATP-driven molecular motor driving the stepwise translocation of polypeptide chains across the membrane. This Limosilactobacillus reuteri (strain DSM 20016) (Lactobacillus reuteri) protein is Protein translocase subunit SecA.